We begin with the raw amino-acid sequence, 115 residues long: Hydrogenase maturation factor HypA (115 aa).

A Ni(2+)-binding site is contributed by His2. Positions 73, 76, 89, and 92 each coordinate Zn(2+).

The protein belongs to the HypA/HybF family.

Its function is as follows. Involved in the maturation of [NiFe] hydrogenases. Required for nickel insertion into the metal center of the hydrogenase. This is Hydrogenase maturation factor HypA from Shewanella halifaxensis (strain HAW-EB4).